Consider the following 189-residue polypeptide: GTP cyclohydrolase 1 (189 aa).

Zn(2+) is bound by residues Cys79, His82, and Cys150.

The protein belongs to the GTP cyclohydrolase I family. Homomer.

It catalyses the reaction GTP + H2O = 7,8-dihydroneopterin 3'-triphosphate + formate + H(+). Its pathway is cofactor biosynthesis; 7,8-dihydroneopterin triphosphate biosynthesis; 7,8-dihydroneopterin triphosphate from GTP: step 1/1. This is GTP cyclohydrolase 1 from Rickettsia peacockii (strain Rustic).